Consider the following 376-residue polypeptide: Chaperone protein DnaJ (376 aa).

Residues 5-70 (DYYEVLGVGR…DKKAAYDQFG (66 aa)) form the J domain. The CR-type zinc finger occupies 132–210 (GLTKELRIPT…CHGDGRVEKS (79 aa)). Zn(2+)-binding residues include Cys145, Cys148, Cys162, Cys165, Cys184, Cys187, Cys198, and Cys201. 4 CXXCXGXG motif repeats span residues 145–152 (CDLCDGSG), 162–169 (CTTCHGQG), 184–191 (CPTCHGRG), and 198–205 (CTKCHGDG).

The protein belongs to the DnaJ family. In terms of assembly, homodimer. Requires Zn(2+) as cofactor.

The protein localises to the cytoplasm. Functionally, participates actively in the response to hyperosmotic and heat shock by preventing the aggregation of stress-denatured proteins and by disaggregating proteins, also in an autonomous, DnaK-independent fashion. Unfolded proteins bind initially to DnaJ; upon interaction with the DnaJ-bound protein, DnaK hydrolyzes its bound ATP, resulting in the formation of a stable complex. GrpE releases ADP from DnaK; ATP binding to DnaK triggers the release of the substrate protein, thus completing the reaction cycle. Several rounds of ATP-dependent interactions between DnaJ, DnaK and GrpE are required for fully efficient folding. Also involved, together with DnaK and GrpE, in the DNA replication of plasmids through activation of initiation proteins. This chain is Chaperone protein DnaJ, found in Shewanella putrefaciens (strain CN-32 / ATCC BAA-453).